The following is a 372-amino-acid chain: Queuine tRNA-ribosyltransferase (372 aa).

Catalysis depends on Asp89, which acts as the Proton acceptor. Residues 89-93 (DSGGF), Asp161, and Gly232 each bind substrate. The RNA binding stretch occupies residues 262–268 (GIGDLPS). The active-site Nucleophile is the Asp281. The segment at 286–290 (TKAAR) is RNA binding; important for wobble base 34 recognition. Zn(2+)-binding residues include Cys319, Cys321, Cys324, and His351.

The protein belongs to the queuine tRNA-ribosyltransferase family. Homodimer. Within each dimer, one monomer is responsible for RNA recognition and catalysis, while the other monomer binds to the replacement base PreQ1. Zn(2+) is required as a cofactor.

The catalysed reaction is 7-aminomethyl-7-carbaguanine + guanosine(34) in tRNA = 7-aminomethyl-7-carbaguanosine(34) in tRNA + guanine. Its pathway is tRNA modification; tRNA-queuosine biosynthesis. Functionally, catalyzes the base-exchange of a guanine (G) residue with the queuine precursor 7-aminomethyl-7-deazaguanine (PreQ1) at position 34 (anticodon wobble position) in tRNAs with GU(N) anticodons (tRNA-Asp, -Asn, -His and -Tyr). Catalysis occurs through a double-displacement mechanism. The nucleophile active site attacks the C1' of nucleotide 34 to detach the guanine base from the RNA, forming a covalent enzyme-RNA intermediate. The proton acceptor active site deprotonates the incoming PreQ1, allowing a nucleophilic attack on the C1' of the ribose to form the product. After dissociation, two additional enzymatic reactions on the tRNA convert PreQ1 to queuine (Q), resulting in the hypermodified nucleoside queuosine (7-(((4,5-cis-dihydroxy-2-cyclopenten-1-yl)amino)methyl)-7-deazaguanosine). This is Queuine tRNA-ribosyltransferase from Chlamydia abortus (strain DSM 27085 / S26/3) (Chlamydophila abortus).